Consider the following 130-residue polypeptide: Annexin A1 (130 aa).

Residue Gln19 forms an Isoglutamyl lysine isopeptide (Gln-Lys) (interchain with K-?) linkage. Residue Ser24 is modified to Phosphoserine; by PKC. 2 Annexin repeats span residues 37 to 108 and 109 to 130; these read FDPS…ALLK and TPAQ…TDRR. Gly54, Val55, Glu57, Lys92, Leu95, Glu100, Met122, Gly124, Gly126, Thr127, and Arg130 together coordinate Ca(2+).

This sequence belongs to the annexin family.

The protein resides in the nucleus. The protein localises to the cytoplasm. Its subcellular location is the cell projection. It is found in the cilium. It localises to the basolateral cell membrane. The protein resides in the lateral cell membrane. The protein localises to the cell membrane. Its subcellular location is the apical cell membrane. It is found in the membrane. It localises to the early endosome. The protein resides in the cytoplasmic vesicle membrane. The protein localises to the endosome membrane. Its subcellular location is the secreted. It is found in the extracellular space. It localises to the extracellular exosome. The protein resides in the cytoplasmic vesicle. The protein localises to the secretory vesicle lumen. Its subcellular location is the phagocytic cup. Functionally, plays important roles in the innate immune response as effector of glucocorticoid-mediated responses and regulator of the inflammatory process. Has anti-inflammatory activity. Plays a role in glucocorticoid-mediated down-regulation of the early phase of the inflammatory response. Promotes resolution of inflammation and wound healing. Functions at least in part by activating the formyl peptide receptors and downstream signaling cascades. Promotes chemotaxis of granulocytes and monocytes via activation of the formyl peptide receptors. Contributes to the adaptive immune response by enhancing signaling cascades that are triggered by T-cell activation, regulates differentiation and proliferation of activated T-cells. Promotes the differentiation of T-cells into Th1 cells and negatively regulates differentiation into Th2 cells. Has no effect on unstimulated T-cells. Promotes rearrangement of the actin cytoskeleton, cell polarization and cell migration. Negatively regulates hormone exocytosis via activation of the formyl peptide receptors and reorganization of the actin cytoskeleton. Has high affinity for Ca(2+) and can bind up to eight Ca(2+) ions. Displays Ca(2+)-dependent binding to phospholipid membranes. Plays a role in the formation of phagocytic cups and phagosomes. Plays a role in phagocytosis by mediating the Ca(2+)-dependent interaction between phagosomes and the actin cytoskeleton. This Gallus gallus (Chicken) protein is Annexin A1 (ANXA1).